The following is a 527-amino-acid chain: Lysine--tRNA ligase (527 aa).

Glutamate 431 and glutamate 438 together coordinate Mg(2+).

Belongs to the class-II aminoacyl-tRNA synthetase family. Homodimer. Requires Mg(2+) as cofactor.

The protein localises to the cytoplasm. The enzyme catalyses tRNA(Lys) + L-lysine + ATP = L-lysyl-tRNA(Lys) + AMP + diphosphate. The protein is Lysine--tRNA ligase (lysS) of Chlamydia pneumoniae (Chlamydophila pneumoniae).